A 276-amino-acid chain; its full sequence is Large ribosomal subunit protein uL2 (276 aa).

A disordered region spans residues 224-276 (AMNPIDHPHGGGEGKTSGGRNPVTPWGVPTKGKKTRKRNKSSNKYIKRVSDKG). The span at 254-270 (KGKKTRKRNKSSNKYIK) shows a compositional bias: basic residues.

The protein belongs to the universal ribosomal protein uL2 family. Part of the 50S ribosomal subunit. Forms a bridge to the 30S subunit in the 70S ribosome.

One of the primary rRNA binding proteins. Required for association of the 30S and 50S subunits to form the 70S ribosome, for tRNA binding and peptide bond formation. It has been suggested to have peptidyltransferase activity; this is somewhat controversial. Makes several contacts with the 16S rRNA in the 70S ribosome. This Ehrlichia canis (strain Jake) protein is Large ribosomal subunit protein uL2.